A 570-amino-acid chain; its full sequence is Frizzled-2 (570 aa).

A signal peptide spans 1 to 28 (MRARSALPRSALPRLLLPLLLLPAAGPA). Residues 29–252 (QFHGEKGISI…QEETRFARLW (224 aa)) lie on the Extracellular side of the membrane. The region spanning 39–158 (PDHGFCQPIS…HGAEQICVGQ (120 aa)) is the FZ domain. 5 cysteine pairs are disulfide-bonded: C44-C105, C52-C98, C89-C126, C115-C155, and C119-C143. N58 carries N-linked (GlcNAc...) asparagine glycosylation. N-linked (GlcNAc...) asparagine glycosylation is present at N159. Residues 166 to 194 (PALLTTAPPSGLQPGAGGTPGGPGGGGSP) are disordered. Gly residues predominate over residues 179 to 193 (PGAGGTPGGPGGGGS). A helical membrane pass occupies residues 253–273 (ILTWSVLCCASTFFTVTTYLV). The Cytoplasmic portion of the chain corresponds to 274-284 (DMQRFRYPERP). A helical membrane pass occupies residues 285 to 305 (IIFLSGCYTMVSVAYIAGFVL). The Extracellular portion of the chain corresponds to 306 to 332 (QERVVCNERFSEDGYRTVVQGTKKEGC). Residues 333–353 (TILFMMLYFFSMASSIWWVIL) traverse the membrane as a helical segment. The Cytoplasmic portion of the chain corresponds to 354 to 375 (SLTWFLAAGMKWGHEAIEANSQ). Residues 376 to 396 (YFHLAAWAVPAVKTITILAMG) form a helical membrane-spanning segment. Residues 397-419 (QIDGDLLSGVCFVGLNSLDPLRG) lie on the Extracellular side of the membrane. A helical membrane pass occupies residues 420-440 (FVLAPLFVYLFIGTSFLLAGF). Residues 441 to 466 (VSLFRIRTIMKHDGTKTEKLERLMVR) are Cytoplasmic-facing. The chain crosses the membrane as a helical span at residues 467-487 (IGVFSVLYTVPATIVIACYFY). Over 488-524 (EQAFREHWERSWVSQHCKSLAIPCPAHYTPRMSPDFT) the chain is Extracellular. Residues 525–545 (VYMIKYLMTLIVGITSGFWIW) traverse the membrane as a helical segment. Over 546 to 570 (SGKTLHSWRKFYTRLTNSRHGETTV) the chain is Cytoplasmic. A Lys-Thr-X-X-X-Trp motif, mediates interaction with the PDZ domain of Dvl family members motif is present at residues 548–553 (KTLHSW). The PDZ-binding signature appears at 568–570 (TTV).

The protein belongs to the G-protein coupled receptor Fz/Smo family. Post-translationally, ubiquitinated by ZNRF3, leading to its degradation by the proteasome. Expressed in embryonic and adult heart, lung, chondrocytes and brain. Also expressed in the developing gastrointestinal tract (strongest in foregut), much weaker expression in the adult. No expression in fetal liver and adult spleen. Up-regulated in esophageal squamous cell carcinomas.

It localises to the membrane. The protein resides in the cell membrane. In terms of biological role, receptor for Wnt proteins. Most of frizzled receptors are coupled to the beta-catenin canonical signaling pathway, which leads to the activation of disheveled proteins, inhibition of GSK-3 kinase, nuclear accumulation of beta-catenin and activation of Wnt target genes. A second signaling pathway involving PKC and calcium fluxes has been seen for some family members, but it is not yet clear if it represents a distinct pathway or if it can be integrated in the canonical pathway, as PKC seems to be required for Wnt-mediated inactivation of GSK-3 kinase. Both pathways seem to involve interactions with G-proteins. May be involved in transduction and intercellular transmission of polarity information during tissue morphogenesis and/or in differentiated tissues. This Mus musculus (Mouse) protein is Frizzled-2 (Fzd2).